We begin with the raw amino-acid sequence, 682 residues long: Potassium-transporting ATPase ATP-binding subunit (682 aa).

Helical transmembrane passes span 34–54 (PVMFVVWAGSVLTTLLTLAMV), 58–78 (IAGSALFTGIISLWLWFTVLF), 219–239 (IALTILLIALTIVFLLATATL), and 254–274 (VLVALLVCLIPTTIGGLLSAI). Asp-307 acts as the 4-aspartylphosphate intermediate in catalysis. Residues Asp-344, Glu-348, 377-384 (FTAQSRMS), and Lys-395 each bind ATP. 2 residues coordinate Mg(2+): Asp-518 and Asp-522. 3 helical membrane passes run 588 to 608 (FAIIPAAFAATYPQLNALNVM), 616 to 636 (AILSAVIFNALIIIFLIPLAL), and 662 to 682 (LVVPFIGIKVIDVLLTLLGLA).

It belongs to the cation transport ATPase (P-type) (TC 3.A.3) family. Type IA subfamily. In terms of assembly, the system is composed of three essential subunits: KdpA, KdpB and KdpC.

It is found in the cell inner membrane. It carries out the reaction K(+)(out) + ATP + H2O = K(+)(in) + ADP + phosphate + H(+). Functionally, part of the high-affinity ATP-driven potassium transport (or Kdp) system, which catalyzes the hydrolysis of ATP coupled with the electrogenic transport of potassium into the cytoplasm. This subunit is responsible for energy coupling to the transport system and for the release of the potassium ions to the cytoplasm. This Salmonella newport (strain SL254) protein is Potassium-transporting ATPase ATP-binding subunit.